Consider the following 277-residue polypeptide: Nickel transport system permease protein NikC (277 aa).

Topologically, residues 1–12 (MNFFLSSRWSVR) are cytoplasmic. A helical membrane pass occupies residues 13–33 (LALIIIALLALIALTSQWWLP). Topologically, residues 34–78 (YDPQAIDLPSRLLSPDAQHWLGTDHLGRDIFSRLMAATRVSLGSV) are periplasmic. Positions 67–260 (LMAATRVSLG…ISVMAFNLVG (194 aa)) constitute an ABC transmembrane type-1 domain. A helical transmembrane segment spans residues 79 to 99 (MACLLLVLTLGLVIGGSAGLI). Topologically, residues 100–120 (GGRVDQATMRVADMFMTFPTS) are cytoplasmic. Residues 121-141 (ILSFFMVGVLGTGLTNVIIAI) traverse the membrane as a helical segment. Residues 142-183 (ALSHWAWYARMVRSLVISLRQREFVLASRLSGAGHVRVFVDH) are Periplasmic-facing. The helical transmembrane segment at 184–204 (LAGAVIPSLLVLATLDIGHMM) threads the bilayer. The Cytoplasmic segment spans residues 205-207 (LHV). Residues 208-228 (AGMSFLGLGVTAPTAEWGVMI) traverse the membrane as a helical segment. The Periplasmic segment spans residues 229-239 (NDARQYIWTQP). Residues 240–260 (LQMFWPGLALFISVMAFNLVG) form a helical membrane-spanning segment. Topologically, residues 261-277 (DALRDHLDPHLVTEHAH) are cytoplasmic.

The protein belongs to the binding-protein-dependent transport system permease family. OppBC subfamily. In terms of assembly, probably forms a heterodimeric pore with NikB.

The protein resides in the cell inner membrane. In terms of biological role, involved in a nickel transport system, probably translocates nickel through the bacterial inner membrane. This chain is Nickel transport system permease protein NikC (nikC), found in Escherichia coli O157:H7.